The following is a 165-amino-acid chain: Putative protein FAM86C1P (165 aa).

This sequence belongs to the class I-like SAM-binding methyltransferase superfamily. EEF2KMT family. As to quaternary structure, interacts with EEF2KMT.

The protein is Putative protein FAM86C1P of Homo sapiens (Human).